A 279-amino-acid chain; its full sequence is Urease accessory protein UreD (279 aa).

Belongs to the UreD family. In terms of assembly, ureD, UreF and UreG form a complex that acts as a GTP-hydrolysis-dependent molecular chaperone, activating the urease apoprotein by helping to assemble the nickel containing metallocenter of UreC. The UreE protein probably delivers the nickel.

It localises to the cytoplasm. Functionally, required for maturation of urease via the functional incorporation of the urease nickel metallocenter. This chain is Urease accessory protein UreD, found in Nostoc punctiforme (strain ATCC 29133 / PCC 73102).